A 644-amino-acid polypeptide reads, in one-letter code: Arginine--tRNA ligase (644 aa).

Residues 129-139 carry the 'HIGH' region motif; that stretch reads ANPIHPLHLGH.

This sequence belongs to the class-I aminoacyl-tRNA synthetase family.

It is found in the cytoplasm. It carries out the reaction tRNA(Arg) + L-arginine + ATP = L-arginyl-tRNA(Arg) + AMP + diphosphate. This Aeropyrum pernix (strain ATCC 700893 / DSM 11879 / JCM 9820 / NBRC 100138 / K1) protein is Arginine--tRNA ligase (argS).